The sequence spans 415 residues: Arginine biosynthesis bifunctional protein ArgJ (415 aa).

6 residues coordinate substrate: Thr-156, Lys-182, Thr-193, Glu-279, Asn-410, and Thr-415. Thr-193 serves as the catalytic Nucleophile.

The protein belongs to the ArgJ family. In terms of assembly, heterotetramer of two alpha and two beta chains.

The protein resides in the cytoplasm. It carries out the reaction N(2)-acetyl-L-ornithine + L-glutamate = N-acetyl-L-glutamate + L-ornithine. It catalyses the reaction L-glutamate + acetyl-CoA = N-acetyl-L-glutamate + CoA + H(+). It functions in the pathway amino-acid biosynthesis; L-arginine biosynthesis; L-ornithine and N-acetyl-L-glutamate from L-glutamate and N(2)-acetyl-L-ornithine (cyclic): step 1/1. It participates in amino-acid biosynthesis; L-arginine biosynthesis; N(2)-acetyl-L-ornithine from L-glutamate: step 1/4. In terms of biological role, catalyzes two activities which are involved in the cyclic version of arginine biosynthesis: the synthesis of N-acetylglutamate from glutamate and acetyl-CoA as the acetyl donor, and of ornithine by transacetylation between N(2)-acetylornithine and glutamate. The polypeptide is Arginine biosynthesis bifunctional protein ArgJ (Synechococcus sp. (strain ATCC 27144 / PCC 6301 / SAUG 1402/1) (Anacystis nidulans)).